The following is a 260-amino-acid chain: uncharacterized protein (260 aa).

Residues 8–166 form the PNPLA domain; it reads LALGSGGARG…VDRIPVSVVK (159 aa). The short motif at 39–43 is the GXSXG element; that stretch reads GSSMG. Catalysis depends on Ser41, which acts as the Nucleophile. Asp153 functions as the Proton acceptor in the catalytic mechanism. Positions 153–155 match the DGA/G motif; it reads DGA.

The protein belongs to the NTE family.

This is an uncharacterized protein from Bacillus subtilis (strain 168).